A 291-amino-acid chain; its full sequence is 33 kDa chaperonin (291 aa).

Cystine bridges form between cysteine 237-cysteine 239 and cysteine 270-cysteine 273.

Belongs to the HSP33 family. In terms of processing, under oxidizing conditions two disulfide bonds are formed involving the reactive cysteines. Under reducing conditions zinc is bound to the reactive cysteines and the protein is inactive.

The protein resides in the cytoplasm. Redox regulated molecular chaperone. Protects both thermally unfolding and oxidatively damaged proteins from irreversible aggregation. Plays an important role in the bacterial defense system toward oxidative stress. The sequence is that of 33 kDa chaperonin from Bacillus cereus (strain B4264).